We begin with the raw amino-acid sequence, 336 residues long: Acyl-CoA-binding domain-containing protein 4 (336 aa).

The helical; Signal-anchor transmembrane segment at 12-32 (AVIGLLFAFLVAKLISTVIAF) threads the bilayer. The interval 40-88 (TRSTPTSPSAADTPAAPAPPPASLDGGHGDTSDGSGSDSDSDWEGVEST) is disordered. Residues 42–54 (STPTSPSAADTPA) are compositionally biased toward low complexity. Positions 78 to 88 (SDSDWEGVEST) are enriched in acidic residues. The 89-residue stretch at 90–178 (LDEEFSAASA…VDELFPNWSM (89 aa)) folds into the ACB domain. An acyl-CoA-binding positions include 120–124 (YGLYK), Lys-142, Lys-146, and Tyr-165. An N-linked (GlcNAc...) asparagine glycan is attached at Asn-175. Residues 179 to 202 (GSSTKRKDEDTTVSASSSKGPMGP) are disordered. N-linked (GlcNAc...) asparagine glycosylation occurs at Asn-216. 2 ANK repeats span residues 251 to 280 (EGRTPLHWAVDRGHLNSVEILVNANADVNA) and 284 to 313 (EGQTALHYAVLCEREDIAELLVKHHADVQI).

Belongs to the ACBP family. Highly expressed in leaves. Expressed at low levels in roots and seeds.

It is found in the endoplasmic reticulum membrane. Its function is as follows. Binds medium- and long-chain acyl-CoA esters with high affinity. Can interact in vitro with palmitoyl-CoA, linoleoyl-CoA and linolenoyl-CoA. Binds phosphatidic acid (PA) and phosphatidylcholine (PC) in vitro. May play a role in the biosynthesis of phospholipids. In Oryza sativa subsp. japonica (Rice), this protein is Acyl-CoA-binding domain-containing protein 4.